Reading from the N-terminus, the 198-residue chain is Sulfite reductase, dissimilatory-type subunit alpha (198 aa).

[4Fe-4S] cluster contacts are provided by C45, C64, C67, and C70. The region spanning G55–E83 is the 4Fe-4S ferredoxin-type domain.

In terms of assembly, heterohexamer of two alpha, two beta and two gamma subunits.

Its function is as follows. Part of the complex that catalyzes the reduction of sulfite to sulfide. The alpha and beta subunits may have arisen by gene duplication. They both bind 2 iron-sulfur clusters, but the alpha subunit seems to be catalytically inactive, due to substitutions along the putative substrate access channel, and because it binds sirohydrochlorin (the dematallated form of siroheme) instead of siroheme. The protein is Sulfite reductase, dissimilatory-type subunit alpha (dsrA) of Megalodesulfovibrio gigas (strain ATCC 19364 / DSM 1382 / NCIMB 9332 / VKM B-1759) (Desulfovibrio gigas).